A 246-amino-acid polypeptide reads, in one-letter code: Electron transfer flavoprotein beta subunit lysine methyltransferase (246 aa).

The protein belongs to the methyltransferase superfamily. ETFBKMT family.

It is found in the cytoplasm. Its subcellular location is the mitochondrion matrix. It catalyses the reaction L-lysyl-[protein] + 3 S-adenosyl-L-methionine = N(6),N(6),N(6)-trimethyl-L-lysyl-[protein] + 3 S-adenosyl-L-homocysteine + 3 H(+). Its function is as follows. Protein-lysine methyltransferase that selectively trimethylates the flavoprotein ETFB in mitochondria. Thereby, may negatively regulate the function of ETFB in electron transfer from Acyl-CoA dehydrogenases to the main respiratory chain. This chain is Electron transfer flavoprotein beta subunit lysine methyltransferase (etfbkmt), found in Xenopus laevis (African clawed frog).